A 551-amino-acid chain; its full sequence is Hydroxylamine reductase (551 aa).

Cys3, Cys6, Cys18, and Cys25 together coordinate [2Fe-2S] cluster. Positions 249, 273, 317, 405, 433, 458, 492, and 494 each coordinate hybrid [4Fe-2O-2S] cluster. At Cys405 the chain carries Cysteine persulfide.

Belongs to the HCP family. The cofactor is [2Fe-2S] cluster. It depends on hybrid [4Fe-2O-2S] cluster as a cofactor.

It localises to the cytoplasm. It carries out the reaction A + NH4(+) + H2O = hydroxylamine + AH2 + H(+). Catalyzes the reduction of hydroxylamine to form NH(3) and H(2)O. The protein is Hydroxylamine reductase of Edwardsiella ictaluri (strain 93-146).